The primary structure comprises 79 residues: Exodeoxyribonuclease 7 small subunit (79 aa).

This sequence belongs to the XseB family. In terms of assembly, heterooligomer composed of large and small subunits.

The protein resides in the cytoplasm. It catalyses the reaction Exonucleolytic cleavage in either 5'- to 3'- or 3'- to 5'-direction to yield nucleoside 5'-phosphates.. Bidirectionally degrades single-stranded DNA into large acid-insoluble oligonucleotides, which are then degraded further into small acid-soluble oligonucleotides. In Dechloromonas aromatica (strain RCB), this protein is Exodeoxyribonuclease 7 small subunit.